We begin with the raw amino-acid sequence, 354 residues long: Protein OVEREXPRESSOR OF CATIONIC PEROXIDASE 3 (354 aa).

Residues 63–70 (NRKGFVSS) carry the Nuclear localization signal 1 motif. Disordered regions lie at residues 65–98 (KGFVSSSSSSPKKNKKKSLDGADNGGGEEEEDPF) and 151–186 (TGDVDVDVDNDDDDNDDDDNDDDDDDSEEDERPTKL). Positions 154–181 (VDVDVDNDDDDNDDDDNDDDDDDSEEDE) are enriched in acidic residues. Residues 191–198 (LKRLAYAL) carry the Nuclear localization signal 2 motif. Residues 243–264 (KPPVAAPENSSPDPSPVESLSA) are disordered. Residues 286 to 345 (RWSAQKRVKKAHIETLEKVYRRSKRPTNAVVSSIVQVTNLPRKRVLKWFEDKRAEDGVPD) constitute a DNA-binding region (homeobox). A Nuclear localization signal 3 motif is present at residues 293–300 (VKKAHIET).

The protein localises to the nucleus. In terms of biological role, may modulate chromatin structure by regulation of nucleosome assembly/disassembly. Homeodomain transcription factor that mediates jasmonic acid (JA)-mediated COI1-dependent and abscisic acid (ABA)-mediated PMR4-dependent resistance to infection by necrotrophic fungal pathogens (e.g. B.cinerea and P.cucumerina) and bacterial pathogens (e.g. P.syringae DC3000); this resistance involves at least callose deposition. Required for the P.fluorescens WCS417r-triggered JA-dependent induced systemic resistance (ISR) against both P.syringae DC3000 and H.arabidopsidis. Negative regulator of the ABA-dependent drought resistance. This is Protein OVEREXPRESSOR OF CATIONIC PEROXIDASE 3 from Arabidopsis thaliana (Mouse-ear cress).